Consider the following 258-residue polypeptide: Indole-3-glycerol phosphate synthase (258 aa).

This sequence belongs to the TrpC family.

It catalyses the reaction 1-(2-carboxyphenylamino)-1-deoxy-D-ribulose 5-phosphate + H(+) = (1S,2R)-1-C-(indol-3-yl)glycerol 3-phosphate + CO2 + H2O. It participates in amino-acid biosynthesis; L-tryptophan biosynthesis; L-tryptophan from chorismate: step 4/5. In Chlorobium phaeovibrioides (strain DSM 265 / 1930) (Prosthecochloris vibrioformis (strain DSM 265)), this protein is Indole-3-glycerol phosphate synthase.